The primary structure comprises 963 residues: SH3 domain-binding protein 4 (963 aa).

Residues 55 to 114 (GNAKEVIAIKDYCPTNFTTLKFSKGDHLYVLDTSGGEWWYAHNTTEMGYIPSSYVQPLNY) enclose the SH3 1 domain. 5 positions are modified to phosphoserine: Ser-131, Ser-246, Ser-251, Ser-279, and Ser-296. In terms of domain architecture, ZU5 spans 317 to 454 (TNIVCKLDSS…LEPCMYVAVV (138 aa)). At Ser-637 the chain carries Phosphoserine. Residues 654 to 724 (SSLKFGKLLK…HTKNVLVVGR (71 aa)) enclose the SH3 2 domain.

Homodimer or homooligomer. Interacts with DNM2, EPS15, clathrin, the adapter protein complex 2/AP-2 and TFRC. Interacts with the Rag GTPases RRAGA, RRAGB, RRAGC and RRAGD; the interaction is most probably direct, preferentially occurs with their inactive GDP-bound form and is negatively regulated by amino acids. In terms of assembly, (Microbial infection) Interacts with molluscum contagiosum virus protein MC159L; this interaction is important for the suppression of autophagy. Post-translationally, phosphorylated upon EGF stimulation. Phosphorylation prevents interaction with DNM2. As to expression, expressed in all tissues tested with higher expression in pancreas. Expressed by retinal pigment epithelial cells (at protein level).

The protein resides in the membrane. The protein localises to the clathrin-coated pit. It is found in the cytoplasmic vesicle. Its subcellular location is the clathrin-coated vesicle. It localises to the nucleus. Functionally, may function in transferrin receptor internalization at the plasma membrane through a cargo-specific control of clathrin-mediated endocytosis. Alternatively, may act as a negative regulator of the amino acid-induced TOR signaling by inhibiting the formation of active Rag GTPase complexes. Preferentially binds inactive Rag GTPase complexes and prevents their interaction with the mTORC1 complex inhibiting its relocalization to lysosomes and its activation. Thereby, may indirectly regulate cell growth, proliferation and autophagy. This chain is SH3 domain-binding protein 4 (SH3BP4), found in Homo sapiens (Human).